The chain runs to 202 residues: Orotate phosphoribosyltransferase (202 aa).

5-phospho-alpha-D-ribose 1-diphosphate is bound at residue 113-121; it reads EDIITTGGS. Orotate-binding residues include Thr-117 and Arg-145.

It belongs to the purine/pyrimidine phosphoribosyltransferase family. PyrE subfamily. In terms of assembly, homodimer. It depends on Mg(2+) as a cofactor.

It catalyses the reaction orotidine 5'-phosphate + diphosphate = orotate + 5-phospho-alpha-D-ribose 1-diphosphate. It participates in pyrimidine metabolism; UMP biosynthesis via de novo pathway; UMP from orotate: step 1/2. Functionally, catalyzes the transfer of a ribosyl phosphate group from 5-phosphoribose 1-diphosphate to orotate, leading to the formation of orotidine monophosphate (OMP). The polypeptide is Orotate phosphoribosyltransferase (Sulfurimonas denitrificans (strain ATCC 33889 / DSM 1251) (Thiomicrospira denitrificans (strain ATCC 33889 / DSM 1251))).